The following is a 657-amino-acid chain: Protein kinase and PP2C-like domain-containing protein (657 aa).

Positions Phe-32 to Val-327 constitute a Protein kinase domain. ATP is bound by residues Ile-38 to Val-46 and Lys-59. The Proton acceptor; for kinase activity role is filled by Asp-156. The PPM-type phosphatase domain occupies Ser-390–Leu-647. Positions 426, 427, 598, and 638 each coordinate Mn(2+).

This sequence in the N-terminal section; belongs to the protein kinase superfamily. Ser/Thr protein kinase family. In the C-terminal section; belongs to the PP2C family. It depends on Mg(2+) as a cofactor. Mn(2+) is required as a cofactor.

The enzyme catalyses L-seryl-[protein] + ATP = O-phospho-L-seryl-[protein] + ADP + H(+). It catalyses the reaction L-threonyl-[protein] + ATP = O-phospho-L-threonyl-[protein] + ADP + H(+). It carries out the reaction O-phospho-L-seryl-[protein] + H2O = L-seryl-[protein] + phosphate. The catalysed reaction is O-phospho-L-threonyl-[protein] + H2O = L-threonyl-[protein] + phosphate. This is Protein kinase and PP2C-like domain-containing protein from Oryza sativa subsp. japonica (Rice).